The primary structure comprises 360 residues: N-acetylmuramoyl-L-alanine amidase CwlL (360 aa).

Residues 1-39 (MVKVVKNFVKVNQYTRPGLKLAGVKGIVMHYTATPGASA) form the signal peptide. The N-acetylmuramoyl-L-alanine amidase domain maps to 40-154 (LNERDYFNGT…DVTNKICPAP (115 aa)). Repeat copies occupy residues 166–191 (RKKVDSLLGNKTVSKTTSSTSQSSKS), 196–259 (LKKG…EKAL), 265–289 (KKKKPSSNGKKTSYPLPSGIYKVKS), and 291–355 (LMKG…KAKL). 2 2 X approximate repeats regions span residues 166-289 (RKKV…KVKS) and 196-355 (LKKG…KAKL).

This sequence belongs to the N-acetylmuramoyl-L-alanine amidase 2 family.

The protein resides in the secreted. The enzyme catalyses Hydrolyzes the link between N-acetylmuramoyl residues and L-amino acid residues in certain cell-wall glycopeptides.. The sequence is that of N-acetylmuramoyl-L-alanine amidase CwlL (cwlL) from Bacillus licheniformis.